The sequence spans 150 residues: 1,4-dihydroxy-2-naphthoyl-CoA hydrolase (150 aa).

Residue Asp-19 is part of the active site.

This sequence belongs to the 4-hydroxybenzoyl-CoA thioesterase family. DHNA-CoA hydrolase subfamily.

It carries out the reaction 1,4-dihydroxy-2-naphthoyl-CoA + H2O = 1,4-dihydroxy-2-naphthoate + CoA + H(+). Its pathway is cofactor biosynthesis; phylloquinone biosynthesis. It functions in the pathway quinol/quinone metabolism; 1,4-dihydroxy-2-naphthoate biosynthesis; 1,4-dihydroxy-2-naphthoate from chorismate: step 7/7. Its function is as follows. Catalyzes the hydrolysis of 1,4-dihydroxy-2-naphthoyl-CoA (DHNA-CoA) to 1,4-dihydroxy-2-naphthoate (DHNA), a reaction involved in phylloquinone (vitamin K1) biosynthesis. This chain is 1,4-dihydroxy-2-naphthoyl-CoA hydrolase, found in Prochlorococcus marinus (strain MIT 9312).